The primary structure comprises 519 residues: DDB1- and CUL4-associated factor 17 (519 aa).

The next 2 membrane-spanning stretches (helical) occupy residues 186 to 206 (VLLYLAVFRVLPFSLVGILEI) and 222 to 242 (GILIVMYSSGLVRLYSFQAII).

Interacts with DDB1, CUL4A and CUL4B. Ubiquitously expressed in the embryo, with higher expression in brain, liver and skin tissues.

It localises to the membrane. The protein resides in the nucleus. The protein localises to the nucleolus. It participates in protein modification; protein ubiquitination. May function as a substrate receptor for CUL4-DDB1 E3 ubiquitin-protein ligase complex. The sequence is that of DDB1- and CUL4-associated factor 17 (Dcaf17) from Mus musculus (Mouse).